The primary structure comprises 183 residues: MIKVVKGDITKFRAEAIVNAANKYLEHGGGVAYAIAKAAAGDVREYIRISKEAMREQLGKDWIDHGEVVVTPPLQLEKNGVKYVIHTVGPYCGGSWDEDKKSKLKLAILGALKKADELGVKSIAFPAISAGIYGCPLEKVVETFVEVVKEFLPSAKSLREVFLVLYSQEDYEKALKIVGQGGV.

Positions 1–182 (MIKVVKGDIT…KALKIVGQGG (182 aa)) constitute a Macro domain.

This is an uncharacterized protein from Pyrococcus furiosus (strain ATCC 43587 / DSM 3638 / JCM 8422 / Vc1).